The chain runs to 76 residues: MKLTCVIVAVLFLTAWTFVTADDSGNGLENLFSKAHHEMKNPKDSKLNKRCLDGGEICGILFPSCCSGWCIVLVCA.

The signal sequence occupies residues methionine 1 to alanine 21. The propeptide occupies aspartate 22–asparagine 48. Disulfide bonds link cysteine 51–cysteine 66, cysteine 58–cysteine 70, and cysteine 65–cysteine 75.

This sequence belongs to the conotoxin O1 superfamily. Expressed by the venom duct.

The protein resides in the secreted. The chain is Conotoxin MaIr332 from Conus marmoreus (Marble cone).